The following is a 189-amino-acid chain: Putative dihydrofolate reductase (189 aa).

The region spanning Lys-3 to Val-185 is the DHFR domain. NADP(+)-binding positions include Ala-9 and Gly-15 to Val-21. Asp-29–Ala-34 serves as a coordination point for substrate. Residue Arg-53–Cys-55 participates in NADP(+) binding. Residue Arg-69 coordinates substrate. NADP(+) contacts are provided by residues Ser-75–Gln-77 and Gly-115–Leu-122.

This sequence belongs to the dihydrofolate reductase family.

The catalysed reaction is (6S)-5,6,7,8-tetrahydrofolate + NADP(+) = 7,8-dihydrofolate + NADPH + H(+). The protein operates within cofactor biosynthesis; tetrahydrofolate biosynthesis; 5,6,7,8-tetrahydrofolate from 7,8-dihydrofolate: step 1/1. Functionally, key enzyme in folate metabolism. Catalyzes an essential reaction for de novo glycine and purine synthesis, and for DNA precursor synthesis. This is Putative dihydrofolate reductase (dhfr-1) from Caenorhabditis elegans.